A 166-amino-acid polypeptide reads, in one-letter code: Mitochondrial fission process protein 1 (166 aa).

2 helical membrane-spanning segments follow: residues 34–54 (SLVP…YVLA) and 78–98 (ALAV…IPGF). An N6-succinyllysine modification is found at lysine 123. Residues 129–149 (LGLLAIPVIIHPIDRSVDFLL) traverse the membrane as a helical segment.

Belongs to the MTFP1 family.

It localises to the mitochondrion inner membrane. Functionally, involved in the mitochondrial division probably by regulating membrane fission. Loss-of-function leads to apoptosis. The protein is Mitochondrial fission process protein 1 (Mtfp1) of Mus musculus (Mouse).